The sequence spans 136 residues: uncharacterized protein (136 aa).

Residues 14-34 traverse the membrane as a helical segment; that stretch reads ASVFAFFVLFLFCLKIILVLF.

The protein localises to the membrane. This is an uncharacterized protein from Mycoplasma genitalium (strain ATCC 33530 / DSM 19775 / NCTC 10195 / G37) (Mycoplasmoides genitalium).